The chain runs to 130 residues: Small ribosomal subunit protein uS9 (130 aa).

It belongs to the universal ribosomal protein uS9 family.

In Streptococcus agalactiae serotype Ia (strain ATCC 27591 / A909 / CDC SS700), this protein is Small ribosomal subunit protein uS9.